The primary structure comprises 488 residues: GTPase Der (488 aa).

EngA-type G domains follow at residues 3 to 166 (PVVA…VSDG) and 201 to 374 (IKLA…QCAT). GTP is bound by residues 9–16 (GRPNVGKS), 56–60 (DTGGI), 118–121 (NKTD), 207–214 (GRPNVGKS), 254–258 (DTAGV), and 319–322 (NKWD). The 85-residue stretch at 375-459 (KRVSTALLTR…PIRIQFNEGA (85 aa)) folds into the KH-like domain.

The protein belongs to the TRAFAC class TrmE-Era-EngA-EngB-Septin-like GTPase superfamily. EngA (Der) GTPase family. As to quaternary structure, associates with the 50S ribosomal subunit.

In terms of biological role, GTPase that plays an essential role in the late steps of ribosome biogenesis. In Sodalis glossinidius (strain morsitans), this protein is GTPase Der.